Reading from the N-terminus, the 1069-residue chain is Rab GTPase-activating protein 1 (1069 aa).

Residues 1-79 are disordered; it reads MDDKASVGKI…DPPMDDQPGE (79 aa). A compositionally biased stretch (low complexity) spans 7 to 22; that stretch reads VGKISVSSDSVSTLNS. Serine 42 carries the post-translational modification Phosphoserine. The region spanning 142–298 is the PID domain; that stretch reads EDSVVFSKLT…IFTFSVSLEI (157 aa). At serine 360 the chain carries Phosphoserine. The segment at 482–527 is disordered; the sequence is ERERRKTTASPSVRLPQSGSQSSVIPSPPEDDEEEDNDEPLLSGSG. Polar residues predominate over residues 489-506; it reads TASPSVRLPQSGSQSSVI. Residues 510-520 show a composition bias toward acidic residues; it reads PEDDEEEDNDE. The Rab-GAP TBC domain occupies 566–752; sequence GVPEALRGEV…HIIDLLLCEG (187 aa). Residues 798 to 1047 are a coiled coil; that stretch reads KKLMELACNM…ALNEVQAAKK (250 aa). Phosphothreonine is present on threonine 996.

In terms of assembly, interacts with RAB6A and tubulin gamma.

It is found in the cytoplasm. Its subcellular location is the cytosol. It localises to the cytoskeleton. The protein resides in the microtubule organizing center. The protein localises to the centrosome. Functionally, may act as a GTPase-activating protein of RAB6A. May play a role in microtubule nucleation by centrosome. May participate in a RAB6A-mediated pathway involved in the metaphase-anaphase transition. The protein is Rab GTPase-activating protein 1 (RABGAP1) of Homo sapiens (Human).